Here is a 415-residue protein sequence, read N- to C-terminus: G patch domain-containing protein 4 (415 aa).

Residue methionine 1 is modified to N-acetylmethionine. A Phosphothreonine modification is found at threonine 4. The G-patch domain occupies 11–57 (GMKFAEEQLLKHGWTQGKGLGRRENGITQALKVTLKQDNHGVGHDPA). Lysine 46 is covalently cross-linked (Glycyl lysine isopeptide (Lys-Gly) (interchain with G-Cter in SUMO2)). Phosphothreonine is present on threonine 116. Disordered regions lie at residues 116-141 (TSGEEKPDRDLGNCSDVDNHEPTPPK) and 191-415 (LGTS…VDLS). The segment covering 118–141 (GEEKPDRDLGNCSDVDNHEPTPPK) has biased composition (basic and acidic residues). A Phosphoserine modification is found at serine 130. The segment covering 191–201 (LGTSQPLTDSE) has biased composition (polar residues). The segment covering 224 to 239 (SLGDELLGHTDRSFRD) has biased composition (basic and acidic residues). Phosphoserine is present on serine 258. Over residues 335–345 (EDLDTQEEEGK) the composition is skewed to acidic residues. Residues 353 to 364 (RKVRRKDKRKRQ) are compositionally biased toward basic residues. The span at 387-397 (AGERSRQYPKE) shows a compositional bias: basic and acidic residues. Residues 398–407 (RAKKKKRKRD) show a composition bias toward basic residues.

The sequence is that of G patch domain-containing protein 4 (Gpatch4) from Mus musculus (Mouse).